A 384-amino-acid polypeptide reads, in one-letter code: 8-amino-7-oxononanoate synthase (384 aa).

Residue Arg-21 participates in substrate binding. 108–109 lines the pyridoxal 5'-phosphate pocket; the sequence is GF. His-133 contributes to the substrate binding site. Residues Ser-179, His-207, and Thr-233 each coordinate pyridoxal 5'-phosphate. An N6-(pyridoxal phosphate)lysine modification is found at Lys-236. Position 352 (Thr-352) interacts with substrate.

This sequence belongs to the class-II pyridoxal-phosphate-dependent aminotransferase family. BioF subfamily. Homodimer. It depends on pyridoxal 5'-phosphate as a cofactor.

The catalysed reaction is 6-carboxyhexanoyl-[ACP] + L-alanine + H(+) = (8S)-8-amino-7-oxononanoate + holo-[ACP] + CO2. It participates in cofactor biosynthesis; biotin biosynthesis. In terms of biological role, catalyzes the decarboxylative condensation of pimeloyl-[acyl-carrier protein] and L-alanine to produce 8-amino-7-oxononanoate (AON), [acyl-carrier protein], and carbon dioxide. This is 8-amino-7-oxononanoate synthase from Escherichia coli O6:H1 (strain CFT073 / ATCC 700928 / UPEC).